The chain runs to 244 residues: Capsid protein (244 aa).

The short motif at 1–24 (MSTSKRKRADEAQWNKRSTKKKGS) is the Bipartite nuclear localization signal element. The segment at 1 to 39 (MSTSKRKRADEAQWNKRSTKKKGSAPQAKKPGGKGERPS) is disordered.

Belongs to the geminiviridae capsid protein family. As to quaternary structure, homomultimer. Interacts with the movement protein. Binds to single-stranded and double-stranded viral DNA.

It localises to the virion. The protein resides in the host nucleus. Encapsidates the viral genome into characteristic twinned ('geminate') particles. Binds the genomic viral ssDNA and shuttles it into and out of the cell nucleus. Plays a role in protection of the genome from degradation, virus acquisition and transmission by insect vectors, infectivity, and systemic movement. The CP of monopartite geminiviruses is absolutely essential for virus movement. This is Capsid protein from Avena sativa (Oat).